The following is a 251-amino-acid chain: Aliphatic sulfonates import ATP-binding protein SsuB (251 aa).

The ABC transporter domain maps to 3 to 231; sequence VSIDGVSKYF…PRSKTSESFQ (229 aa). Residue 39–46 participates in ATP binding; the sequence is GPSGCGKS.

This sequence belongs to the ABC transporter superfamily. Aliphatic sulfonates importer (TC 3.A.1.17.2) family. The complex is composed of two ATP-binding proteins (SsuB), two transmembrane proteins (SsuC) and a solute-binding protein (SsuA).

It localises to the cell membrane. The enzyme catalyses ATP + H2O + aliphatic sulfonate-[sulfonate-binding protein]Side 1 = ADP + phosphate + aliphatic sulfonateSide 2 + [sulfonate-binding protein]Side 1.. Its function is as follows. Part of the ABC transporter complex SsuABC involved in aliphatic sulfonates import. Responsible for energy coupling to the transport system. The polypeptide is Aliphatic sulfonates import ATP-binding protein SsuB (Bacillus cereus (strain ATCC 10987 / NRS 248)).